Consider the following 144-residue polypeptide: Probable DNA-directed RNA polymerases I and III subunit RPAC2 (144 aa).

Residues 14–47 (KVEAETMEVDEQPQETPQVDDEEDLNVPSKKKME) form a disordered region. A compositionally biased stretch (acidic residues) spans 18-38 (ETMEVDEQPQETPQVDDEEDL).

The protein belongs to the archaeal Rpo11/eukaryotic RPB11/RPC19 RNA polymerase subunit family. In terms of assembly, component of the RNA polymerase I (Pol I) and RNA polymerase III (Pol III) complexes consisting of at least 13 and 17 subunits, respectively.

The protein localises to the nucleus. DNA-dependent RNA polymerase catalyzes the transcription of DNA into RNA using the four ribonucleoside triphosphates as substrates. Common core component of RNA polymerases I and III which synthesize ribosomal RNA precursors and small RNAs, such as 5S rRNA and tRNAs, respectively. This is Probable DNA-directed RNA polymerases I and III subunit RPAC2 (rpac-19) from Caenorhabditis elegans.